The following is a 904-amino-acid chain: DNA polymerase I (904 aa).

Residues T186–R279 enclose the 5'-3' exonuclease domain. The 3'-5' exonuclease domain occupies R317–A493.

The protein belongs to the DNA polymerase type-A family. In terms of assembly, single-chain monomer with multiple functions.

The enzyme catalyses DNA(n) + a 2'-deoxyribonucleoside 5'-triphosphate = DNA(n+1) + diphosphate. Functionally, in addition to polymerase activity, this DNA polymerase exhibits 3'-5' and 5'-3' exonuclease activity. The polypeptide is DNA polymerase I (polA) (Mycobacterium bovis (strain ATCC BAA-935 / AF2122/97)).